The following is a 527-amino-acid chain: Berberine bridge enzyme-like 5 (527 aa).

The first 19 residues, 1–19, serve as a signal peptide directing secretion; it reads MKALFSVLCLVLLVSILRA. Cysteines 32 and 95 form a disulfide. Residues Asn-35 and Asn-52 are each glycosylated (N-linked (GlcNAc...) asparagine). The region spanning 73–247 is the FAD-binding PCMH-type domain; it reads NYQKLVAIVA…LSWKINLVEV (175 aa). A cross-link (6-(S-cysteinyl)-8alpha-(pros-histidyl)-FAD (His-Cys)) is located at residues 110 to 172; that stretch reads HDYEGLSYTS…QTLAFPAGVC (63 aa). A glycan (N-linked (GlcNAc...) asparagine) is linked at Asn-341.

Belongs to the oxygen-dependent FAD-linked oxidoreductase family. FAD serves as cofactor. Post-translationally, the FAD cofactor is bound via a bicovalent 6-S-cysteinyl, 8alpha-N1-histidyl FAD linkage.

The protein localises to the secreted. Its subcellular location is the cell wall. In terms of biological role, probable flavin-dependent oxidoreductase. The polypeptide is Berberine bridge enzyme-like 5 (Arabidopsis thaliana (Mouse-ear cress)).